Here is a 330-residue protein sequence, read N- to C-terminus: uncharacterized protein (330 aa).

Helical transmembrane passes span 27–47 (MGAY…VVVG), 56–76 (VFLS…MLLF), 90–110 (VFVL…CLLY), 119–139 (ESGI…FFLL), 147–167 (TLIG…FGAG), 176–196 (LFGN…TLMA), 206–226 (LAIS…FALF), 243–263 (YVLY…YSGV), 270–290 (VSGI…GVIL), and 294–314 (FEFV…VTVI). 2 consecutive EamA domains span residues 38 to 163 (AIVG…AINL) and 187 to 314 (IGEA…VTVI).

The protein belongs to the EamA transporter family.

The protein resides in the cell membrane. This is an uncharacterized protein from Bacillus subtilis (strain 168).